The chain runs to 365 residues: Regulatory protein RapG (365 aa).

TPR repeat units follow at residues 135-168 (GKLYYKLGQNIVSLNHTRQAVKTFREETDYKKKL), 169-202 (ASALITMSGNFTEMSQFEEAEAYLDEAIRITSEL), 209-242 (AQLLHNFGLLHAQSGKSEEAVSKLEEALQNDEYA), 244-284 (SAYY…EPNR), and 326-359 (RELSILAGERYRELELYKEAAHFFYEALQIEELI).

The protein belongs to the Rap family.

The protein localises to the cytoplasm. Its activity is regulated as follows. Inhibited by PhrG. Its function is as follows. Involved in the regulation of expression of DegU-controlled genes. Inhibits the binding of DegU to the promoter regions of aprE, coding for an extracellular alkaline protease, and comK, a master regulator for development of genetic competence. RapG does not stimulate dephosphorylation of DegU-P. The protein is Regulatory protein RapG (rapG) of Bacillus subtilis (strain 168).